We begin with the raw amino-acid sequence, 135 residues long: MLSPQRTRFRKQHRGRMKGISSRGNRICFGRYALQALEPAWITSRQIEAGRRAMSRNVRRGGQIWVRIFPDKPVTVRPTETRMGSGKGFPEYWVAVVKPGKILYEMGGVPENIARKAISIASSKMPIRTQFIISG.

Belongs to the universal ribosomal protein uL16 family. As to quaternary structure, part of the 50S ribosomal subunit.

The protein localises to the plastid. The protein resides in the chloroplast. The protein is Large ribosomal subunit protein uL16c of Phaseolus vulgaris (Kidney bean).